Reading from the N-terminus, the 101-residue chain is Small ribosomal subunit protein uS14A (101 aa).

Belongs to the universal ribosomal protein uS14 family. As to quaternary structure, part of the 30S ribosomal subunit. Contacts proteins S3 and S10.

Its function is as follows. Binds 16S rRNA, required for the assembly of 30S particles and may also be responsible for determining the conformation of the 16S rRNA at the A site. This is Small ribosomal subunit protein uS14A from Mycolicibacterium smegmatis (strain ATCC 700084 / mc(2)155) (Mycobacterium smegmatis).